The chain runs to 273 residues: Shikimate dehydrogenase (NADP(+)) (273 aa).

Shikimate-binding positions include 15 to 17 (SLS) and T62. The Proton acceptor role is filled by K66. An NADP(+)-binding site is contributed by E78. Residues N87 and D102 each contribute to the shikimate site. NADP(+)-binding positions include 126-130 (GAGGA), 150-155 (NRTIEK), and I217. Y219 serves as a coordination point for shikimate. G240 serves as a coordination point for NADP(+).

The protein belongs to the shikimate dehydrogenase family. Homodimer.

It catalyses the reaction shikimate + NADP(+) = 3-dehydroshikimate + NADPH + H(+). Its pathway is metabolic intermediate biosynthesis; chorismate biosynthesis; chorismate from D-erythrose 4-phosphate and phosphoenolpyruvate: step 4/7. Involved in the biosynthesis of the chorismate, which leads to the biosynthesis of aromatic amino acids. Catalyzes the reversible NADPH linked reduction of 3-dehydroshikimate (DHSA) to yield shikimate (SA). This is Shikimate dehydrogenase (NADP(+)) from Nitrosopumilus maritimus (strain SCM1).